The sequence spans 947 residues: Transcriptional regulator WAR1 (947 aa).

Over residues 1 to 10 the composition is skewed to basic and acidic residues; the sequence is MSDTTPEKGS. The interval 1-52 is disordered; that stretch reads MSDTTPEKGSVDSVSPSASNGSNTNNPLNNSSPQPLKSNESDKKPKVTRRSV. A compositionally biased stretch (low complexity) spans 19–38; the sequence is SNGSNTNNPLNNSSPQPLKS. A DNA-binding region (zn(2)-C6 fungal-type) is located at residues 54–86; the sequence is CKSCHSLKVKCTPSDPNNPSAPCVRCINANRIC. Positions 96-222 are disordered; sequence RRKKSEILEA…SPTSKDDEIN (127 aa). Positions 129-142 are enriched in low complexity; it reads NSSENYSSSINNAN. 2 stretches are compositionally biased toward polar residues: residues 143-158 and 167-185; these read DSSL…TFDP and QASS…QSAA.

Homodimer.

It localises to the nucleus. Functionally, transcription factor required for yeast cell adherence to silicone substrate. Plays a role in resistance to weak organic acids such as acetate and sorbate. Binds in vitro to a nitric oxide-responsive element (NORE) but seems not to be involved in response to nitrosative stress. The protein is Transcriptional regulator WAR1 (WAR1) of Candida albicans (strain SC5314 / ATCC MYA-2876) (Yeast).